We begin with the raw amino-acid sequence, 1234 residues long: DNA-directed RNA polymerase subunit beta (1234 aa).

The tract at residues 1169-1234 (ESVDEDADEL…LDLDDFGDEH (66 aa)) is disordered. 2 stretches are compositionally biased toward acidic residues: residues 1171–1180 (VDEDADELEV) and 1191–1234 (EKEE…GDEH).

It belongs to the RNA polymerase beta chain family. As to quaternary structure, the RNAP catalytic core consists of 2 alpha, 1 beta, 1 beta' and 1 omega subunit. When a sigma factor is associated with the core the holoenzyme is formed, which can initiate transcription.

It catalyses the reaction RNA(n) + a ribonucleoside 5'-triphosphate = RNA(n+1) + diphosphate. Functionally, DNA-dependent RNA polymerase catalyzes the transcription of DNA into RNA using the four ribonucleoside triphosphates as substrates. This chain is DNA-directed RNA polymerase subunit beta, found in Clostridium botulinum (strain Langeland / NCTC 10281 / Type F).